The primary structure comprises 544 residues: Phenylalanine--tRNA ligase beta subunit (544 aa).

One can recognise a B5 domain in the interval 268–343; that stretch reads LIHKIQNVRE…MSIGYNNLEP (76 aa). Mg(2+)-binding residues include Asp321, Asp327, Glu330, and Asp331.

Belongs to the phenylalanyl-tRNA synthetase beta subunit family. Type 2 subfamily. As to quaternary structure, tetramer of two alpha and two beta subunits. It depends on Mg(2+) as a cofactor.

The protein resides in the cytoplasm. The catalysed reaction is tRNA(Phe) + L-phenylalanine + ATP = L-phenylalanyl-tRNA(Phe) + AMP + diphosphate + H(+). In Saccharolobus solfataricus (strain ATCC 35092 / DSM 1617 / JCM 11322 / P2) (Sulfolobus solfataricus), this protein is Phenylalanine--tRNA ligase beta subunit.